The following is a 230-amino-acid chain: MVKLVFARHGESEWNKANLFTGWADVDLSEKGTQQAIDAGKLIKEAGIEFDLAFTSVLKRAIKTTNLALEYSDQLWVPVEKSWRLNERHYGGLTGKNKAEAAEQFGDEQVHIWRRSYDVLPPDMAKDDEHSAHTDRRYAHLDSSVIPDAENLKVTLERALPFWEDKIAPALVDGKNVFIGAHGNSIRALVKHIKRLNDDEIMDVEIPNFPPLVFEFDEKLNVTAEYYLGK.

Residues 8–15 (RHGESEWN), 21–22 (TG), Arg60, 87–90 (ERHY), Lys98, 114–115 (RR), and 183–184 (GN) contribute to the substrate site. Residue His9 is the Tele-phosphohistidine intermediate of the active site. Residue Glu87 is the Proton donor/acceptor of the active site.

Belongs to the phosphoglycerate mutase family. BPG-dependent PGAM subfamily.

It carries out the reaction (2R)-2-phosphoglycerate = (2R)-3-phosphoglycerate. It participates in carbohydrate degradation; glycolysis; pyruvate from D-glyceraldehyde 3-phosphate: step 3/5. Its function is as follows. Catalyzes the interconversion of 2-phosphoglycerate and 3-phosphoglycerate. The protein is 2,3-bisphosphoglycerate-dependent phosphoglycerate mutase of Streptococcus uberis (strain ATCC BAA-854 / 0140J).